The following is a 331-amino-acid chain: Isopentenyl-diphosphate delta-isomerase (331 aa).

4 to 5 (RK) lines the substrate pocket. FMN contacts are provided by residues 59–61 (AMT), Ser-89, and Asn-116. Gln-146 is a substrate binding site. Mg(2+) is bound at residue Glu-147. FMN contacts are provided by residues Lys-178, Ser-203, Thr-208, 252 to 254 (GIR), and 273 to 274 (SR).

This sequence belongs to the IPP isomerase type 2 family. As to quaternary structure, homooctamer. Dimer of tetramers. FMN is required as a cofactor. Requires NADPH as cofactor. Mg(2+) serves as cofactor.

The protein resides in the cytoplasm. It catalyses the reaction isopentenyl diphosphate = dimethylallyl diphosphate. In terms of biological role, involved in the biosynthesis of isoprenoids. Catalyzes the 1,3-allylic rearrangement of the homoallylic substrate isopentenyl (IPP) to its allylic isomer, dimethylallyl diphosphate (DMAPP). The chain is Isopentenyl-diphosphate delta-isomerase from Streptococcus mutans serotype c (strain ATCC 700610 / UA159).